The primary structure comprises 391 residues: Zinc finger protein ubi-d4 (391 aa).

Position 2 is an N-acetylalanine (Ala2). Residues Lys10, Lys99, Lys107, and Lys108 each participate in a glycyl lysine isopeptide (Lys-Gly) (interchain with G-Cter in SUMO2) cross-link. 2 disordered regions span residues 79-147 (WRKK…GEFP) and 165-199 (DDLD…KLDA). 2 stretches are compositionally biased toward basic and acidic residues: residues 100 to 110 (PDTDQTLKKEG) and 126 to 140 (DPLE…RVDD). Ser142 is modified (phosphoserine). Residues 165-174 (DDLDDEDYEE) show a composition bias toward acidic residues. Tyr172 is modified (phosphotyrosine). Thr176 carries the post-translational modification Phosphothreonine. Glycyl lysine isopeptide (Lys-Gly) (interchain with G-Cter in SUMO2) cross-links involve residues Lys178 and Lys196. Ser200 is subject to Phosphoserine. The C2H2-type zinc-finger motif lies at 209-232 (YACDICGKRYKNRPGLSYHYAHSH). A disordered region spans residues 233-266 (LAEEEGEDKEDSRPPTPVSQRSEEQKSKKGPDGL). The residue at position 244 (Ser244) is a Phosphoserine. Over residues 253 to 263 (RSEEQKSKKGP) the composition is skewed to basic and acidic residues. PHD-type zinc fingers lie at residues 270–330 (NNYC…CKCC) and 327–377 (CKCC…CLDL). Ser280 carries the phosphoserine modification. Lys281 participates in a covalent cross-link: Glycyl lysine isopeptide (Lys-Gly) (interchain with G-Cter in SUMO2).

Belongs to the requiem/DPF family. Interacts with the nucleosomes, in particular nucleosomes bearing histone H3 crotonylated at 'Lys-14' (H3K14cr) for which DPF2 has high affinity. Also interacts (via PHD-type zinc finger domains) with histone H3 butyrylated at 'Lys-14' (H3K14bu), histone H3 propionylated at 'Lys-14' (H3K14pr), and histone H3 acetylated at 'Lys-14' (H3K14ac). Interacts with histone H3 acetylated at 'Lys-9' (H3K9ac), histone H3 di-methylated at 'Lys-9' (H3K9me2), and histone H3 tri-methylated at 'Lys-9' (H3K9me3). Interacts with histone H4 acetylated at 'Lys-12' (H4K12ac). Interacts with histone H4 acetylated at 'Lys-16' (H4K16ac). Interacts with SWI/SNF complex components. Interacts with SMARCA2, SMARCA4, SMARCB1 and SMARCD1. Interacts with SMARCC1, SMARCC2 and ACTL6A. Interacts with RUNX1. As to expression, in embryo, highest levels are seen in brain, eyes, thymus and olfactory epithelium in nose, whereas several other tissues, including the musculoskeletal system, show moderate expression. In adult, higher expression in testis, medium in thymus and spleen, lower in certain parts of the brain as the hippocampus. No expression in adult heart, lung, liver, duodenum and kidney.

The protein resides in the nucleus. It localises to the cytoplasm. In terms of biological role, plays an active role in transcriptional regulation by binding modified histones H3 and H4. Is a negative regulator of myeloid differentiation of hematopoietic progenitor cells. Might also have a role in the development and maturation of lymphoid cells. Involved in the regulation of non-canonical NF-kappa-B pathway. This chain is Zinc finger protein ubi-d4 (Dpf2), found in Mus musculus (Mouse).